Reading from the N-terminus, the 120-residue chain is MATHNVHSCEFEVFGRVQGVNFRRHALRKAKTLGLRGWCMNSSRGTVKGYIEGRPAEMDVMKEWLRTTGSPLSSIEKVEFSSQRERDRYGYANFHIKPDPHENRPVHEGLGSSSSHHDSN.

Alanine 2 bears the N-acetylalanine mark. The Acylphosphatase-like domain occupies 8 to 98 (SCEFEVFGRV…YGYANFHIKP (91 aa)). Catalysis depends on residues arginine 23 and asparagine 41. The segment at 91–120 (YANFHIKPDPHENRPVHEGLGSSSSHHDSN) is disordered. The segment covering 96–107 (IKPDPHENRPVH) has biased composition (basic and acidic residues).

Belongs to the acylphosphatase family.

The protein resides in the cytoplasm. It catalyses the reaction an acyl phosphate + H2O = a carboxylate + phosphate + H(+). This Drosophila melanogaster (Fruit fly) protein is Acylphosphatase-1 (Acyp).